We begin with the raw amino-acid sequence, 35 residues long: Photosystem II reaction center protein T (35 aa).

Residues 3–23 (ALVYTFLLVGTLGIIFFAIFF) form a helical membrane-spanning segment.

The protein belongs to the PsbT family. PSII is composed of 1 copy each of membrane proteins PsbA, PsbB, PsbC, PsbD, PsbE, PsbF, PsbH, PsbI, PsbJ, PsbK, PsbL, PsbM, PsbT, PsbY, PsbZ, Psb30/Ycf12, at least 3 peripheral proteins of the oxygen-evolving complex and a large number of cofactors. It forms dimeric complexes.

It localises to the plastid. It is found in the chloroplast thylakoid membrane. Its function is as follows. Found at the monomer-monomer interface of the photosystem II (PS II) dimer, plays a role in assembly and dimerization of PSII. PSII is a light-driven water plastoquinone oxidoreductase, using light energy to abstract electrons from H(2)O, generating a proton gradient subsequently used for ATP formation. This chain is Photosystem II reaction center protein T, found in Chaetosphaeridium globosum (Charophycean green alga).